A 345-amino-acid chain; its full sequence is Ribosomal RNA large subunit methyltransferase F (345 aa).

Over residues 1–14 (MTSKPMTRRPTANN) the composition is skewed to polar residues. Disordered regions lie at residues 1–35 (MTSK…RNPH) and 225–258 (EANS…NAAQ). Residues 229-239 (RKQHNLQRHRG) show a composition bias toward basic residues. Over residues 246–258 (ISRSSTKSGNAAQ) the composition is skewed to polar residues.

Belongs to the methyltransferase superfamily. METTL16/RlmF family.

The protein localises to the cytoplasm. It catalyses the reaction adenosine(1618) in 23S rRNA + S-adenosyl-L-methionine = N(6)-methyladenosine(1618) in 23S rRNA + S-adenosyl-L-homocysteine + H(+). In terms of biological role, specifically methylates the adenine in position 1618 of 23S rRNA. The chain is Ribosomal RNA large subunit methyltransferase F from Psychrobacter arcticus (strain DSM 17307 / VKM B-2377 / 273-4).